The chain runs to 375 residues: S-(hydroxymethyl)glutathione dehydrogenase (375 aa).

Zn(2+) is bound at residue Cys40. His41 lines the NAD(+) pocket. Zn(2+) is bound by residues His62, Glu63, Cys92, Cys95, Cys98, Cys106, and Cys170. NAD(+)-binding positions include 195–200, Asp219, 293–295, and 318–320; these read GLGGIG, IGV, and TAF.

It belongs to the zinc-containing alcohol dehydrogenase family. Class-III subfamily. Homotetramer. Requires Zn(2+) as cofactor.

The catalysed reaction is a primary alcohol + NAD(+) = an aldehyde + NADH + H(+). The enzyme catalyses a secondary alcohol + NAD(+) = a ketone + NADH + H(+). It carries out the reaction S-(hydroxymethyl)glutathione + NADP(+) = S-formylglutathione + NADPH + H(+). It catalyses the reaction S-(hydroxymethyl)glutathione + NAD(+) = S-formylglutathione + NADH + H(+). The catalysed reaction is S-nitrosoglutathione + NADH + H(+) = S-(hydroxysulfenamide)glutathione + NAD(+). Functionally, oxidizes long-chain alcohols and, in the presence of glutathione, is able to oxidize formaldehyde. Also acts as a S-nitroso-glutathione reductase by catalyzing the NADH-dependent reduction of S-nitrosoglutathione, thereby regulating protein S-nitrosylation. This Paracoccus denitrificans protein is S-(hydroxymethyl)glutathione dehydrogenase (flhA).